The sequence spans 393 residues: Lysine/ornithine decarboxylase (393 aa).

Lysine 51 is subject to N6-(pyridoxal phosphate)lysine. Catalysis depends on cysteine 323, which acts as the Proton donor; shared with dimeric partner.

This sequence belongs to the Orn/Lys/Arg decarboxylase class-II family. Homodimer. The cofactor is pyridoxal 5'-phosphate.

It catalyses the reaction L-lysine + H(+) = cadaverine + CO2. It carries out the reaction L-ornithine + H(+) = putrescine + CO2. The protein operates within amine and polyamine biosynthesis; putrescine biosynthesis via L-ornithine pathway; putrescine from L-ornithine: step 1/1. Inhibited competitively by both alpha-difluoromethyllysine and alpha-difluoromethylornithine. In terms of biological role, decarboxylates both L-lysine and L-ornithine with similar catalytic efficiency. The protein is Lysine/ornithine decarboxylase (ldc) of Selenomonas ruminantium.